Here is a 366-residue protein sequence, read N- to C-terminus: Probable neutral protease 2 homolog B (366 aa).

The first 19 residues, 1-19, serve as a signal peptide directing secretion; it reads MQVIVALAALSSLAAPALG. Positions 20 to 189 are excised as a propeptide; sequence FSIPRGVPVS…RGPRSRITKR (170 aa). 3 disulfide bridges follow: Cys-197–Cys-267, Cys-274–Cys-292, and Cys-306–Cys-366. Zn(2+) is bound at residue His-317. Glu-318 is an active-site residue. Positions 321 and 332 each coordinate Zn(2+).

Belongs to the peptidase M35 family. It depends on Zn(2+) as a cofactor.

The protein resides in the secreted. The catalysed reaction is Preferential cleavage of bonds with hydrophobic residues in P1'. Also 3-Asn-|-Gln-4 and 8-Gly-|-Ser-9 bonds in insulin B chain.. Probable secreted metalloprotease that shows high activities on basic nuclear substrates such as histone and protamine. May be involved in virulence. This Trichophyton rubrum (Athlete's foot fungus) protein is Probable neutral protease 2 homolog B (NpII-B).